The following is a 365-amino-acid chain: Mitochondrial protein C2orf69 homolog (365 aa).

A mitochondrion-targeting transit peptide spans 1–24; it reads MLGSRRLRSPALVLLLLRPLLASG. The disordered stretch occupies residues 28-64; the sequence is SRLQTRAMNPGGGERGSPEDSHRLQRSTVPGSDPQRS. Over residues 53-64 the composition is skewed to polar residues; that stretch reads RSTVPGSDPQRS.

This sequence belongs to the C2orf69 family.

It localises to the mitochondrion matrix. In terms of biological role, may play a role in the respiratory chain. This chain is Mitochondrial protein C2orf69 homolog, found in Mus musculus (Mouse).